Consider the following 260-residue polypeptide: Hydroxyethylthiazole kinase 2 (260 aa).

Position 40 (M40) interacts with substrate. Residues R116 and T161 each coordinate ATP. A188 is a binding site for substrate.

It belongs to the Thz kinase family. The cofactor is Mg(2+).

The enzyme catalyses 5-(2-hydroxyethyl)-4-methylthiazole + ATP = 4-methyl-5-(2-phosphooxyethyl)-thiazole + ADP + H(+). Its pathway is cofactor biosynthesis; thiamine diphosphate biosynthesis; 4-methyl-5-(2-phosphoethyl)-thiazole from 5-(2-hydroxyethyl)-4-methylthiazole: step 1/1. Catalyzes the phosphorylation of the hydroxyl group of 4-methyl-5-beta-hydroxyethylthiazole (THZ). This chain is Hydroxyethylthiazole kinase 2, found in Oceanobacillus iheyensis (strain DSM 14371 / CIP 107618 / JCM 11309 / KCTC 3954 / HTE831).